A 123-amino-acid polypeptide reads, in one-letter code: Histone H2B 2 (123 aa).

Residues 1-32 (MAPPKPSAKGAKKAAKTVTKPKDGKKRRHARK) are disordered. Serine 110 carries an O-linked (GlcNAc) serine glycan. Residue lysine 118 forms a Glycyl lysine isopeptide (Lys-Gly) (interchain with G-Cter in ubiquitin) linkage.

Belongs to the histone H2B family. As to quaternary structure, the nucleosome is a histone octamer containing two molecules each of H2A, H2B, H3 and H4 assembled in one H3-H4 heterotetramer and two H2A-H2B heterodimers. The octamer wraps approximately 147 bp of DNA. Post-translationally, monoubiquitination of Lys-118 gives a specific tag for epigenetic transcriptional activation and is also prerequisite for histone H3 'Lys-4' and 'Lys-79' methylation. In terms of processing, glcNAcylation at Ser-110 promotes monoubiquitination of Lys-118. It fluctuates in response to extracellular glucose, and associates with transcribed genes.

The protein localises to the nucleus. The protein resides in the chromosome. Its function is as follows. Core component of nucleosome. Nucleosomes wrap and compact DNA into chromatin, limiting DNA accessibility to the cellular machineries which require DNA as a template. Histones thereby play a central role in transcription regulation, DNA repair, DNA replication and chromosomal stability. DNA accessibility is regulated via a complex set of post-translational modifications of histones, also called histone code, and nucleosome remodeling. This is Histone H2B 2 (his-4) from Caenorhabditis elegans.